The sequence spans 437 residues: Histidine--tRNA ligase (437 aa).

Belongs to the class-II aminoacyl-tRNA synthetase family. Homodimer.

The protein resides in the cytoplasm. It catalyses the reaction tRNA(His) + L-histidine + ATP = L-histidyl-tRNA(His) + AMP + diphosphate + H(+). The chain is Histidine--tRNA ligase from Opitutus terrae (strain DSM 11246 / JCM 15787 / PB90-1).